We begin with the raw amino-acid sequence, 286 residues long: Formamidopyrimidine-DNA glycosylase (286 aa).

The Schiff-base intermediate with DNA role is filled by P2. E3 serves as the catalytic Proton donor. The active-site Proton donor; for beta-elimination activity is K60. DNA-binding residues include H103, R122, and R167. The segment at 252–286 adopts an FPG-type zinc-finger fold; sequence WVYRRNQKPCRKCGTLIEKTKVAGRSTHWCPNCQN. R276 serves as the catalytic Proton donor; for delta-elimination activity.

This sequence belongs to the FPG family. Monomer. The cofactor is Zn(2+).

The catalysed reaction is Hydrolysis of DNA containing ring-opened 7-methylguanine residues, releasing 2,6-diamino-4-hydroxy-5-(N-methyl)formamidopyrimidine.. It carries out the reaction 2'-deoxyribonucleotide-(2'-deoxyribose 5'-phosphate)-2'-deoxyribonucleotide-DNA = a 3'-end 2'-deoxyribonucleotide-(2,3-dehydro-2,3-deoxyribose 5'-phosphate)-DNA + a 5'-end 5'-phospho-2'-deoxyribonucleoside-DNA + H(+). In terms of biological role, involved in base excision repair of DNA damaged by oxidation or by mutagenic agents. Acts as a DNA glycosylase that recognizes and removes damaged bases. Has a preference for oxidized purines, such as 7,8-dihydro-8-oxoguanine (8-oxoG). Has AP (apurinic/apyrimidinic) lyase activity and introduces nicks in the DNA strand. Cleaves the DNA backbone by beta-delta elimination to generate a single-strand break at the site of the removed base with both 3'- and 5'-phosphates. This chain is Formamidopyrimidine-DNA glycosylase, found in Prochlorococcus marinus (strain MIT 9211).